The chain runs to 218 residues: Thiamine-phosphate synthase (218 aa).

Residues 46 to 50 (QFRDK) and aspartate 83 contribute to the 4-amino-2-methyl-5-(diphosphooxymethyl)pyrimidine site. Mg(2+)-binding residues include aspartate 84 and aspartate 103. Serine 122 serves as a coordination point for 4-amino-2-methyl-5-(diphosphooxymethyl)pyrimidine. Position 149-151 (149-151 (TNS)) interacts with 2-[(2R,5Z)-2-carboxy-4-methylthiazol-5(2H)-ylidene]ethyl phosphate. 4-amino-2-methyl-5-(diphosphooxymethyl)pyrimidine is bound at residue lysine 152. 2-[(2R,5Z)-2-carboxy-4-methylthiazol-5(2H)-ylidene]ethyl phosphate is bound by residues glycine 181 and 201–202 (IT).

Belongs to the thiamine-phosphate synthase family. The cofactor is Mg(2+).

The catalysed reaction is 2-[(2R,5Z)-2-carboxy-4-methylthiazol-5(2H)-ylidene]ethyl phosphate + 4-amino-2-methyl-5-(diphosphooxymethyl)pyrimidine + 2 H(+) = thiamine phosphate + CO2 + diphosphate. It catalyses the reaction 2-(2-carboxy-4-methylthiazol-5-yl)ethyl phosphate + 4-amino-2-methyl-5-(diphosphooxymethyl)pyrimidine + 2 H(+) = thiamine phosphate + CO2 + diphosphate. It carries out the reaction 4-methyl-5-(2-phosphooxyethyl)-thiazole + 4-amino-2-methyl-5-(diphosphooxymethyl)pyrimidine + H(+) = thiamine phosphate + diphosphate. It participates in cofactor biosynthesis; thiamine diphosphate biosynthesis; thiamine phosphate from 4-amino-2-methyl-5-diphosphomethylpyrimidine and 4-methyl-5-(2-phosphoethyl)-thiazole: step 1/1. In terms of biological role, condenses 4-methyl-5-(beta-hydroxyethyl)thiazole monophosphate (THZ-P) and 2-methyl-4-amino-5-hydroxymethyl pyrimidine pyrophosphate (HMP-PP) to form thiamine monophosphate (TMP). This chain is Thiamine-phosphate synthase, found in Actinobacillus pleuropneumoniae serotype 7 (strain AP76).